Reading from the N-terminus, the 151-residue chain is Mitochondrial intermembrane space import and assembly protein 40 homolog (151 aa).

Residues 1–35 (MGQGLSQPAQAVEEPSPPAVEAAPSSSPSPAPAPS) are disordered. Residues 7 to 26 (QPAQAVEEPSPPAVEAAPSS) are compositionally biased toward low complexity. Intrachain disulfides connect C65-C67, C76-C109, and C86-C99. The CHCH domain occupies 73-117 (NGPCGSQFVDAFSCFLKSTEEEKGSDCVKPFIALQDCIKINPEAF). 2 consecutive short sequence motifs (cx9C motif) follow at residues 76-86 (CGSQFVDAFSC) and 99-109 (CVKPFIALQDC). A disordered region spans residues 123 to 151 (EEEENDEEAEKSNLKVRAPAWSRESKPKL).

The protein resides in the mitochondrion intermembrane space. It localises to the peroxisome matrix. In terms of biological role, required for the import and folding of small cysteine-containing proteins in the mitochondrial intermembrane space. This is Mitochondrial intermembrane space import and assembly protein 40 homolog from Oryza sativa subsp. japonica (Rice).